A 242-amino-acid chain; its full sequence is 2-C-methyl-D-erythritol 4-phosphate cytidylyltransferase (242 aa).

This sequence belongs to the IspD/TarI cytidylyltransferase family. IspD subfamily.

The enzyme catalyses 2-C-methyl-D-erythritol 4-phosphate + CTP + H(+) = 4-CDP-2-C-methyl-D-erythritol + diphosphate. The protein operates within isoprenoid biosynthesis; isopentenyl diphosphate biosynthesis via DXP pathway; isopentenyl diphosphate from 1-deoxy-D-xylulose 5-phosphate: step 2/6. Functionally, catalyzes the formation of 4-diphosphocytidyl-2-C-methyl-D-erythritol from CTP and 2-C-methyl-D-erythritol 4-phosphate (MEP). The sequence is that of 2-C-methyl-D-erythritol 4-phosphate cytidylyltransferase from Vesicomyosocius okutanii subsp. Calyptogena okutanii (strain HA).